The sequence spans 219 residues: Elongation factor Ts (219 aa).

Positions 81–84 (SDFV) are involved in Mg(2+) ion dislocation from EF-Tu.

The protein belongs to the EF-Ts family.

Its subcellular location is the cytoplasm. In terms of biological role, associates with the EF-Tu.GDP complex and induces the exchange of GDP to GTP. It remains bound to the aminoacyl-tRNA.EF-Tu.GTP complex up to the GTP hydrolysis stage on the ribosome. In Koribacter versatilis (strain Ellin345), this protein is Elongation factor Ts.